A 376-amino-acid chain; its full sequence is Putative F-box protein At1g30930 (376 aa).

The F-box domain maps to 1 to 44 (MKNSIPIDLIIEIVSRSTAKSVARCHCVSKQWRAIFRRKYFIEL).

In Arabidopsis thaliana (Mouse-ear cress), this protein is Putative F-box protein At1g30930.